We begin with the raw amino-acid sequence, 1147 residues long: Protein lin-41 (1147 aa).

The segment at 1–93 is disordered; sequence MATIVPCSLE…PPSMIQSPQQ (93 aa). The segment covering 33-47 has biased composition (low complexity); sequence SGNELSMGGSSSEGD. The segment covering 48 to 65 has biased composition (basic and acidic residues); sequence SMSHHRGEHSPNHHHQDN. Residues 84–93 show a composition bias toward low complexity; sequence PPSMIQSPQQ. The RING-type zinc finger occupies 114-155; that stretch reads CSVCSKSSTIGVLPFVCAHKTCQSCYQMTPSSYDRRACKLCG. The segment at 366–412 adopts a B box-type; atypical zinc-finger fold; that stretch reads MGPIQCQGCESKISFAYCMQCQEALCIHCVQAHQRVRATKQHAFVEL. Zn(2+) contacts are provided by Cys371, Cys374, Cys394, and His398. The stretch at 565–618 forms a coiled coil; it reads AFDTHVNALEERRKELLKRVETVKNLKLSVLISQAESLQSKQIDLQQAIQTATK. The stretch at 723–817 is one Filamin repeat; it reads ACGDLLSSSI…ISGCPTTMDI (95 aa). NHL repeat units follow at residues 832 to 875, 879 to 922, 926 to 969, 974 to 1017, 1022 to 1065, and 1107 to 1147; these read ILTF…FDKD, ISKF…FDEN, LLKF…FTPQ, RKCG…LSPR, MKVY…FASD, and SAPT…IRVF. The tract at residues 1104–1123 is disordered; that stretch reads AFSSAPTPLTPSPRQLLDRP.

The protein belongs to the TRIM/RBCC family.

The protein localises to the cytoplasm. It localises to the P-body. Its function is as follows. Heterochronic protein which acts downstream of let-7 in temporal patterning. Plays a role in the developmental timing of postembryonic hypodermal seam cell division and fusion events and adult alae production. Represses lin-29 during late larval stages, which prevents terminal differentiation of hypodermal seam cells and promotes their division. Involved in post-transcriptional gene regulation, uses two independent pathways. Has direct and specific RNA-binding activity and, depending on the location (5'UTR or 3'UTR) of the target site, triggers either mRNA decay or repression of translation. Degrades the mRNA of transcription factor dmd-3 to govern the timing and extent of male tail tip morphogenesis. Plays a role in the sexual maturation of the nervous system. In Caenorhabditis elegans, this protein is Protein lin-41.